Consider the following 1147-residue polypeptide: Disease resistance protein RPP4 (1147 aa).

Residues 11–175 (RRYDVFPSFS…KIANDVSNKL (165 aa)) enclose the TIR domain. E86 is a catalytic residue. Positions 189–446 (EDHIKAIKSI…CFFNGFKVSN (258 aa)) constitute an NB-ARC domain. LRR repeat units lie at residues 548–573 (MRNL…LWSK), 584–606 (PLKL…TFKA), 608–629 (YLVN…TLPL), 630–653 (GSLK…SLAI), 655–676 (LEEL…IQNA), 698–721 (MCNL…IYLP), 722–743 (RKLK…NFKA), 744–766 (EYLV…TQPL), 767–790 (GSLK…SLAI), 792–813 (LERL…IQNA), 814–836 (TKLI…DLNL), 837–860 (ESLE…KMGC), 926–950 (LGSL…SKAT), 952–973 (LKRL…IGNL), 974–996 (HRLV…DVNL), 997–1017 (SSLI…PLIS), 1018–1042 (TRIE…DLTR), and 1044–1064 (SVLL…IFRL).

As to quaternary structure, interacts with RSH1.

It carries out the reaction NAD(+) + H2O = ADP-D-ribose + nicotinamide + H(+). Its function is as follows. TIR-NB-LRR receptor-like protein that confers resistance to the pathogen Hyaloperonospora arabidopsis isolates Emoy2 and Emwa1 (downy mildew disease). Plays a role in the regulation of temperature response during plant growth and survival. This is Disease resistance protein RPP4 from Arabidopsis thaliana (Mouse-ear cress).